The primary structure comprises 340 residues: Phenylalanine--tRNA ligase alpha subunit (340 aa).

Glu255 contacts Mg(2+).

This sequence belongs to the class-II aminoacyl-tRNA synthetase family. Phe-tRNA synthetase alpha subunit type 1 subfamily. Tetramer of two alpha and two beta subunits. Mg(2+) serves as cofactor.

It localises to the cytoplasm. The catalysed reaction is tRNA(Phe) + L-phenylalanine + ATP = L-phenylalanyl-tRNA(Phe) + AMP + diphosphate + H(+). In Heliobacterium modesticaldum (strain ATCC 51547 / Ice1), this protein is Phenylalanine--tRNA ligase alpha subunit.